The chain runs to 340 residues: Maltose epimerase (340 aa).

R79 lines the substrate pocket. The active-site Proton donor is H178. D247 lines the substrate pocket. Catalysis depends on E305, which acts as the Proton acceptor.

This sequence belongs to the aldose epimerase family.

It carries out the reaction alpha-maltose = beta-maltose. It participates in carbohydrate metabolism; hexose metabolism. In terms of biological role, catalyzes the interconversion of alpha and beta anomers of maltose. The polypeptide is Maltose epimerase (Levilactobacillus brevis (strain ATCC 367 / BCRC 12310 / CIP 105137 / JCM 1170 / LMG 11437 / NCIMB 947 / NCTC 947) (Lactobacillus brevis)).